Reading from the N-terminus, the 963-residue chain is Iron-responsive element-binding protein 2 (963 aa).

[4Fe-4S] cluster is bound by residues cysteine 512, cysteine 578, and cysteine 581.

Belongs to the aconitase/IPM isomerase family. As to quaternary structure, interacts with RBCK1 only in iron-rich conditions. Interacts (when associated with the 4Fe-4S) with FBXL5. Interacts with CIAO1 and CIAO2A. Requires [4Fe-4S] cluster as cofactor. Post-translationally, ubiquitinated and degraded by the proteasome in presence of high level of iron and oxygen. Ubiquitinated by a SCF complex containing FBXL5. Upon iron and oxygen depletion FBXL5 is degraded, preventing ubiquitination and allowing its RNA-binding activity. In terms of tissue distribution, ubiquitously expressed in rat tissues, the highest amounts present in skeletal muscle and heart.

The protein localises to the cytoplasm. RNA-binding protein that binds to iron-responsive elements (IRES), which are stem-loop structures found in the 5'-UTR of ferritin, and delta aminolevulinic acid synthase mRNAs, and in the 3'-UTR of transferrin receptor mRNA. Binding to the IRE element in ferritin results in the repression of its mRNA translation. Binding of the protein to the transferrin receptor mRNA inhibits the degradation of this otherwise rapidly degraded mRNA. This is Iron-responsive element-binding protein 2 (Ireb2) from Rattus norvegicus (Rat).